We begin with the raw amino-acid sequence, 463 residues long: O-acetyltransferase SAT5 (463 aa).

The protein belongs to the trichothecene 3-O-acetyltransferase family.

It functions in the pathway mycotoxin biosynthesis. O-acetyltransferase; part of the satratoxin SC1 cluster involved in the biosynthesis of satratoxins, trichothecene mycotoxins that are associated with human food poisonings. Satratoxins are suggested to be made by products of multiple gene clusters (SC1, SC2 and SC3) that encode 21 proteins in all, including polyketide synthases, acetyltransferases, and other enzymes expected to modify the trichothecene skeleton. SC1 encodes 10 proteins, SAT1 to SAT10. The largest are SAT8, which encodes a putative polyketide synthase (PKS) with a conventional non-reducing architecture, and SAT10, a putative protein containing four ankyrin repeats and thus may be involved in protein scaffolding. The putative short-chain reductase SAT3 may assist the PKS in some capacity. SAT6 contains a secretory lipase domain and acts probably as a trichothecene esterase. SAT5 encodes a putative acetyltransferase, and so, with SAT6, may affect endogenous protection from toxicity. The probable transcription factor SAT9 may regulate the expression of the SC1 cluster. SC2 encodes proteins SAT11 to SAT16, the largest of which encodes the putative reducing PKS SAT13. SAT11 is a cytochrome P450 monooxygenase, while SAT14 and SAT16 are probable acetyltransferases. The SC2 cluster may be regulated by the transcription factor SAT15. SC3 is a small cluster that encodes 5 proteins, SAT17 to SAT21. SAT21 is a putative MFS-type transporter which may have a role in exporting secondary metabolites. The four other proteins putatively encoded in SC3 include the taurine hydroxylase-like protein SAT17, the O-methyltransferase SAT18, the acetyltransferase SAT19, and the Cys6-type zinc finger SAT20, the latter being probably involved in regulation of SC3 expression. In Stachybotrys chartarum (strain CBS 109288 / IBT 7711) (Toxic black mold), this protein is O-acetyltransferase SAT5.